A 512-amino-acid chain; its full sequence is Putative ribose/galactose/methyl galactoside import ATP-binding protein 2 (512 aa).

2 consecutive ABC transporter domains span residues 14–251 (IALT…VGRQ) and 262–507 (TSGN…TQRE). Residue 46–53 (GENGAGKS) coordinates ATP.

The protein belongs to the ABC transporter superfamily. Carbohydrate importer 2 (CUT2) (TC 3.A.1.2) family.

The protein resides in the cell inner membrane. The catalysed reaction is D-ribose(out) + ATP + H2O = D-ribose(in) + ADP + phosphate + H(+). The enzyme catalyses D-galactose(out) + ATP + H2O = D-galactose(in) + ADP + phosphate + H(+). Functionally, part of an ABC transporter complex involved in carbohydrate import. Could be involved in ribose, galactose and/or methyl galactoside import. Responsible for energy coupling to the transport system. This chain is Putative ribose/galactose/methyl galactoside import ATP-binding protein 2, found in Burkholderia cenocepacia (strain HI2424).